The sequence spans 132 residues: Small ribosomal subunit protein uS8c (132 aa).

The protein belongs to the universal ribosomal protein uS8 family. As to quaternary structure, part of the 30S ribosomal subunit.

It localises to the plastid. It is found in the chloroplast. In terms of biological role, one of the primary rRNA binding proteins, it binds directly to 16S rRNA central domain where it helps coordinate assembly of the platform of the 30S subunit. The polypeptide is Small ribosomal subunit protein uS8c (rps8) (Psilotum nudum (Whisk fern)).